We begin with the raw amino-acid sequence, 200 residues long: Lipopolysaccharide core heptose(II)-phosphate phosphatase (200 aa).

Residues 1–25 form the signal peptide; sequence MLAFCRSSLKSKKYFIILLALAAIA.

This sequence belongs to the phosphoglycerate mutase family. Ais subfamily.

It localises to the periplasm. It functions in the pathway bacterial outer membrane biogenesis; lipopolysaccharide metabolism. Its function is as follows. Catalyzes the dephosphorylation of heptose(II) of the outer membrane lipopolysaccharide core. This is Lipopolysaccharide core heptose(II)-phosphate phosphatase from Escherichia coli O7:K1 (strain IAI39 / ExPEC).